Reading from the N-terminus, the 407-residue chain is Chorismate synthase (407 aa).

NADP(+) contacts are provided by Arg43 and Arg49. FMN-binding positions include 143–145 (RSS), 264–265 (QA), Gly308, 323–327 (KPIST), and Arg349.

This sequence belongs to the chorismate synthase family. In terms of assembly, homotetramer. FMNH2 is required as a cofactor.

It catalyses the reaction 5-O-(1-carboxyvinyl)-3-phosphoshikimate = chorismate + phosphate. Its pathway is metabolic intermediate biosynthesis; chorismate biosynthesis; chorismate from D-erythrose 4-phosphate and phosphoenolpyruvate: step 7/7. Functionally, catalyzes the anti-1,4-elimination of the C-3 phosphate and the C-6 proR hydrogen from 5-enolpyruvylshikimate-3-phosphate (EPSP) to yield chorismate, which is the branch point compound that serves as the starting substrate for the three terminal pathways of aromatic amino acid biosynthesis. This reaction introduces a second double bond into the aromatic ring system. The chain is Chorismate synthase from Corynebacterium efficiens (strain DSM 44549 / YS-314 / AJ 12310 / JCM 11189 / NBRC 100395).